The primary structure comprises 546 residues: MAKYYIFITGGVVSSLGKGITAASLGSVLESRNLKVTLMKLDPYINVNPGTISPIQHGEVFVTEDGAETDLDLGHYERFIKTKMSKKNSFTSGKIYSEVLKNERKGFYLGSTIQVIPHITNEIKKCIINAGKGFDILLVEIGGTVGDIESLPFLESIRQMSIEIGKNKILYIHLTLVPYLKISKEVKTKPTQHSVKELLSIGIQPDILICRSEKNVSKYEKSKIALFCNVPKQAVFSLKNTNSIYKIPILIKKQGLDSYVCDRFCIKRPEADLSKWKEVIYKQKNPLGNVNIGIIGKYTELPDSYRSLISALEHAGLKNRLMINIQLINSKKIESLGISCLKNLHAILIPGGFGYRGVEGKIIAAKYSREKKIPYFGICLGMQVALIEFARNVTGLSEANSTEFINNCKHPVIAKISEWNKSINYLNKSNISSNNYSTMRLGNQKCHLTKGSLAFKIYNNSIILERHRHRYEVNNIFIEKIKFSGLSVSGWAYYDNHKLVEIIEYSNHPWFVGSQFHPEFNSTPRNSHPLFISFVKAAFDFKNKNI.

Residues 1-266 (MAKYYIFITG…DSYVCDRFCI (266 aa)) form an amidoligase domain region. Position 14 (Ser14) interacts with CTP. Ser14 provides a ligand contact to UTP. ATP-binding positions include 15-20 (SLGKGI) and Asp72. Mg(2+)-binding residues include Asp72 and Glu140. CTP contacts are provided by residues 147–149 (DIE), 187–192 (KTKPTQ), and Lys223. UTP is bound by residues 187–192 (KTKPTQ) and Lys223. The Glutamine amidotransferase type-1 domain maps to 291–544 (NIGIIGKYTE…VKAAFDFKNK (254 aa)). Gly352 lines the L-glutamine pocket. Cys379 serves as the catalytic Nucleophile; for glutamine hydrolysis. Residues 380-383 (LGMQ), Glu403, and Arg470 contribute to the L-glutamine site. Residues His517 and Glu519 contribute to the active site.

It belongs to the CTP synthase family. In terms of assembly, homotetramer.

The enzyme catalyses UTP + L-glutamine + ATP + H2O = CTP + L-glutamate + ADP + phosphate + 2 H(+). The catalysed reaction is L-glutamine + H2O = L-glutamate + NH4(+). It catalyses the reaction UTP + NH4(+) + ATP = CTP + ADP + phosphate + 2 H(+). It participates in pyrimidine metabolism; CTP biosynthesis via de novo pathway; CTP from UDP: step 2/2. With respect to regulation, allosterically activated by GTP, when glutamine is the substrate; GTP has no effect on the reaction when ammonia is the substrate. The allosteric effector GTP functions by stabilizing the protein conformation that binds the tetrahedral intermediate(s) formed during glutamine hydrolysis. Inhibited by the product CTP, via allosteric rather than competitive inhibition. Catalyzes the ATP-dependent amination of UTP to CTP with either L-glutamine or ammonia as the source of nitrogen. Regulates intracellular CTP levels through interactions with the four ribonucleotide triphosphates. This Wigglesworthia glossinidia brevipalpis protein is CTP synthase.